The primary structure comprises 581 residues: Suppressor of cytokine signaling 7 (581 aa).

4 disordered regions span residues 1–23, 89–109, 123–272, and 297–316; these read MVFR…EPGP, PPPP…DPTE, EAES…RTQS, and QRGL…RRSL. 3 stretches are compositionally biased toward pro residues: residues 89 to 99, 154 to 164, and 187 to 198; these read PPPPQPQPPAA, PPGPELPPVPF, and QPPPPPPPPGPL. The tract at residues 124 to 494 is mediates interaction with SORBS3; the sequence is AESLETNSCS…GKFLYFLRSR (371 aa). Residues 208 to 219 show a composition bias toward basic residues; the sequence is GSFKIRLSRLFR. Residues 303 to 313 show a composition bias toward pro residues; the sequence is PHPPTPPPPPR. An SH2 domain is found at 400-509; sequence WYWGPMNWED…PTPVQLLYPV (110 aa). The SOCS box domain maps to 504–554; the sequence is QLLYPVSRFSNVKSLQHLCRFRIRQLVRIDHIPDLPLPKPLISYIRKFYYY.

As to quaternary structure, substrate-recognition component of the ECS(SOCS7) complex, composed of SOCS7, CUL5, ELOB, ELOC and RNF7/RBX2. Interacts, via the third proline-rich region, with the second SH3 domain of the adapter protein NCK1. Also interacts with GRB2, INSR, PLCG1, SORBS3/vinexin, and phosphorylated STAT3 and STAT5. Interacts with SEPT6. Interacts with phosphorylated IRS4 and PIK3R1. In terms of tissue distribution, expressed in brain and leukocytes. Also in fetal lung fibroblasts and fetal brain.

Its subcellular location is the cytoplasm. It localises to the nucleus. The protein localises to the cell membrane. It functions in the pathway protein modification; protein ubiquitination. Its function is as follows. Substrate-recognition component of a cullin-5-RING E3 ubiquitin-protein ligase complex (ECS complex, also named CRL5 complex), which mediates the ubiquitination and subsequent proteasomal degradation of target proteins, such as DAB1 and IRS1. Specifically recognizes and binds phosphorylated proteins via its SH2 domain, promoting their ubiquitination. The ECS(SOCS7) complex acts as a key regulator of reelin signaling by mediating ubiquitination and degradation of phosphorylated DAB1 in the cortical plate of the developing cerebral cortex, thereby regulating neuron positioning during cortex development. Functions in insulin signaling and glucose homeostasis through IRS1 ubiquitination and subsequent proteasomal degradation. Also inhibits prolactin, growth hormone and leptin signaling by preventing STAT3 and STAT5 activation, sequestering them in the cytoplasm and reducing their binding to DNA. The chain is Suppressor of cytokine signaling 7 from Homo sapiens (Human).